Here is a 64-residue protein sequence, read N- to C-terminus: Conotoxin Pu3.4 (64 aa).

Residues 1-16 form the signal peptide; it reads LGVLLPICLLLFPLTA. Positions 17–49 are excised as a propeptide; it reads LPLDGDQPADRPAERMQDDFITEQHPLFDPVKR. Cystine bridges form between cysteine 50-cysteine 63, cysteine 51-cysteine 59, and cysteine 55-cysteine 62. 4-hydroxyproline is present on proline 61.

Belongs to the conotoxin M superfamily. As to expression, expressed by the venom duct.

It localises to the secreted. The chain is Conotoxin Pu3.4 from Conus pulicarius (Flea-bitten cone).